Reading from the N-terminus, the 344-residue chain is Phosphoribosylformylglycinamidine cyclo-ligase (344 aa).

It belongs to the AIR synthase family.

The protein resides in the cytoplasm. It carries out the reaction 2-formamido-N(1)-(5-O-phospho-beta-D-ribosyl)acetamidine + ATP = 5-amino-1-(5-phospho-beta-D-ribosyl)imidazole + ADP + phosphate + H(+). It functions in the pathway purine metabolism; IMP biosynthesis via de novo pathway; 5-amino-1-(5-phospho-D-ribosyl)imidazole from N(2)-formyl-N(1)-(5-phospho-D-ribosyl)glycinamide: step 2/2. The protein is Phosphoribosylformylglycinamidine cyclo-ligase of Laribacter hongkongensis (strain HLHK9).